A 551-amino-acid chain; its full sequence is Glucose-6-phosphate isomerase 2 (551 aa).

Glu359 acts as the Proton donor in catalysis. Active-site residues include His390 and Lys514.

This sequence belongs to the GPI family.

The protein resides in the cytoplasm. It carries out the reaction alpha-D-glucose 6-phosphate = beta-D-fructose 6-phosphate. It functions in the pathway carbohydrate biosynthesis; gluconeogenesis. It participates in carbohydrate degradation; glycolysis; D-glyceraldehyde 3-phosphate and glycerone phosphate from D-glucose: step 2/4. Functionally, catalyzes the reversible isomerization of glucose-6-phosphate to fructose-6-phosphate. The chain is Glucose-6-phosphate isomerase 2 from Streptomyces coelicolor (strain ATCC BAA-471 / A3(2) / M145).